The following is a 274-amino-acid chain: MPDIFQQEARGWLRCGAPPFAGAVAGLTTKHGGESKGPFASLNMGLHVGDDRTDVVNNRRRLAEWLAFPLERWVCCEQVHGADIQKVTKSDRGNGAQDFATAVPGVDGLYTDEAGVLLALCFADCVPIYFVAPSAGLVGLAHAGWRGTAGGIAGHMVWLWQTREHIAPSDIYVAIGPAIGPCCYTVDDRVVDSLRPTLPPESPLPWRETSPGQYALDLKEANRLQLLAAGVPNSHIYVSERCTSCEEALFFSHRRDRGTTGRMLAFIGRREEWT.

46 to 47 (LH) is a binding site for inosine. Residues H80, C125, H142, C182, C183, C242, and C245 each coordinate Zn(2+). Position 262 (R262) interacts with inosine.

This sequence belongs to the purine nucleoside phosphorylase YfiH/LACC1 family. Requires Zn(2+) as cofactor.

The catalysed reaction is adenosine + phosphate = alpha-D-ribose 1-phosphate + adenine. The enzyme catalyses S-methyl-5'-thioadenosine + phosphate = 5-(methylsulfanyl)-alpha-D-ribose 1-phosphate + adenine. It catalyses the reaction inosine + phosphate = alpha-D-ribose 1-phosphate + hypoxanthine. It carries out the reaction adenosine + H2O + H(+) = inosine + NH4(+). Purine nucleoside enzyme that catalyzes the phosphorolysis of adenosine and inosine nucleosides, yielding D-ribose 1-phosphate and the respective free bases, adenine and hypoxanthine. Also catalyzes the phosphorolysis of S-methyl-5'-thioadenosine into adenine and S-methyl-5-thio-alpha-D-ribose 1-phosphate. Also has adenosine deaminase activity. This is Purine nucleoside phosphorylase YlmD from Geobacillus stearothermophilus (strain DSM 13240 / CIP 106956 / 10).